We begin with the raw amino-acid sequence, 639 residues long: Uridine permease (639 aa).

The interval 1-37 (MPVSDSGFDNSSKTMKDDTIPTEDYEEITKESEMGDA) is disordered. Over 1–162 (MPVSDSGFDN…LQLGLNWWQT (162 aa)) the chain is Cytoplasmic. The residue at position 54 (T54) is a Phosphothreonine. Phosphoserine is present on S56. Residues 163–180 (WICIWVGYTFVAFFLILG) form a helical membrane-spanning segment. The Extracellular segment spans residues 181–200 (SKVGNNYHISFPISSRVSFG). Residues 201–225 (IYFSIWIVINRVVMACVWNSTLAYI) form a helical membrane-spanning segment. Over 226 to 259 (GSQCVQLMLKAIFGTNLNTRIKDTIKNPNLTNFE) the chain is Cytoplasmic. The helical transmembrane segment at 260–276 (FMCFMVFWVACLPFLWF) threads the bilayer. The Extracellular segment spans residues 277-283 (PPDKLRH). A helical membrane pass occupies residues 284-305 (IFALKSAITPFAAFGFLIWTLC). Residues 306 to 367 (KAKGHLALGS…KTYKSSVYSQ (62 aa)) lie on the Cytoplasmic side of the membrane. A helical membrane pass occupies residues 368–392 (LIALPVCYAIISLIGILSVSAAYTL). At 393-416 (YGVNYWSPLDILNRYLDNYTSGNR) the chain is on the extracellular side. The helical transmembrane segment at 417 to 435 (AGVFLISFIFAFDQLGANL) threads the bilayer. Residues 436 to 460 (SGNSIPAGTDLTALLPKFINIRRGS) are Cytoplasmic-facing. A helical transmembrane segment spans residues 461–477 (YICALISLAICPWDLLS). Topologically, residues 478–483 (SSSKFT) are extracellular. The helical transmembrane segment at 484–507 (TALAAYAVFLSAIAGVISADYFIV) threads the bilayer. The Cytoplasmic portion of the chain corresponds to 508 to 537 (RKGYVNIFHCYTDKPGSYYMYNKYGTNWRA). Residues 538–562 (VVAYIFGIAPNFAGFLGSVGVSVPI) form a helical membrane-spanning segment. The Extracellular segment spans residues 563 to 572 (GAMKVYYLNY). A helical membrane pass occupies residues 573 to 590 (FVGYLLAALSYCILVYFY). The Cytoplasmic segment spans residues 591-639 (PIKGIPGDAKITDRKWLEEWVEVEEFGTEREAFEEYGGVSTGYEKIRYI). A Glycyl lysine isopeptide (Lys-Gly) (interchain with G-Cter in ubiquitin) cross-link involves residue K635.

Belongs to the purine-cytosine permease (2.A.39) family.

It is found in the membrane. High-affinity transport of uridine. The sequence is that of Uridine permease (FUI1) from Saccharomyces cerevisiae (strain ATCC 204508 / S288c) (Baker's yeast).